The sequence spans 838 residues: Tuftelin-interacting protein 11 (838 aa).

Residues 1-13 (MSLSHLYRDGEGH) are compositionally biased toward basic and acidic residues. The segment at 1–51 (MSLSHLYRDGEGHLDDDDDDERENFEITDWDLQNEFNPNRQRHWQTKEEAT) is required for interaction with DHX15. Disordered stretches follow at residues 1 to 74 (MSLS…RARD) and 86 to 137 (LKKG…SGGT). At Ser-2 the chain carries Phosphoserine. The span at 14–29 (LDDDDDDERENFEITD) shows a compositional bias: acidic residues. The span at 45 to 65 (QTKEEATYGVWAERDSDEERP) shows a compositional bias: basic and acidic residues. 3 positions are modified to phosphoserine: Ser-60, Ser-96, and Ser-99. A compositionally biased stretch (acidic residues) spans 92 to 101 (EEADSEDSDA). Positions 102-117 (EEKPVKQEDFPKDLGP) are enriched in basic and acidic residues. A Phosphoserine modification is found at Ser-145. Residues 150–196 (TKGIGQKLLQKMGYVPGRGLGKNAQGIINPIEAKQRKGKGAVGAYGS) enclose the G-patch domain. The disordered stretch occupies residues 193–237 (AYGSERTTQSLQDFPVADSEEEAEEEFQKELSQWRKDPSGSKKKP). Residue Ser-211 is modified to Phosphoserine. A compositionally biased stretch (basic and acidic residues) spans 218 to 232 (EFQKELSQWRKDPSG). A Nuclear localization signal motif is present at residues 701–706 (VKDKFN). Residues 711 to 735 (IMNRAVSSNVGAYMQPGARENIAYL) form a required for nuclear speckle localization region.

This sequence belongs to the TFP11/STIP family. Identified in the spliceosome C complex. Found in the Intron Large (IL) complex, a post-mRNA release spliceosomal complex containing the excised intron, U2, U5 and U6 snRNPs, and splicing factors. Interacts with TUFT1. Interacts with DHX15; indicative for a recruitment of DHX15 to the IL complex. Interacts with GCFC2. In terms of tissue distribution, widely expressed. In tooth it is expressed in ameloblasts and odontoblasts.

The protein resides in the cytoplasm. It is found in the nucleus. Involved in pre-mRNA splicing, specifically in spliceosome disassembly during late-stage splicing events. Intron turnover seems to proceed through reactions in two lariat-intron associated complexes termed Intron Large (IL) and Intron Small (IS). In cooperation with DHX15 seems to mediate the transition of the U2, U5 and U6 snRNP-containing IL complex to the snRNP-free IS complex leading to efficient debranching and turnover of excised introns. May play a role in the differentiation of ameloblasts and odontoblasts or in the forming of the enamel extracellular matrix. The protein is Tuftelin-interacting protein 11 (Tfip11) of Mus musculus (Mouse).